The following is a 143-amino-acid chain: Large ribosomal subunit protein uL11 (143 aa).

It belongs to the universal ribosomal protein uL11 family. Part of the ribosomal stalk of the 50S ribosomal subunit. Interacts with L10 and the large rRNA to form the base of the stalk. L10 forms an elongated spine to which L12 dimers bind in a sequential fashion forming a multimeric L10(L12)X complex. One or more lysine residues are methylated.

Forms part of the ribosomal stalk which helps the ribosome interact with GTP-bound translation factors. The sequence is that of Large ribosomal subunit protein uL11 from Burkholderia mallei (strain NCTC 10247).